A 677-amino-acid chain; its full sequence is Testis-specific Y-encoded-like protein 2 (677 aa).

The tract at residues Met1–Ala54 is disordered. Residue Lys11 forms a Glycyl lysine isopeptide (Lys-Gly) (interchain with G-Cter in SUMO2) linkage. The residue at position 18 (Ser18) is a Phosphoserine. Over residues Leu25 to Arg44 the composition is skewed to pro residues. Glycyl lysine isopeptide (Lys-Gly) (interchain with G-Cter in SUMO2) cross-links involve residues Lys158 and Lys160. A disordered region spans residues Lys175–Ala202. Over residues Val178–Lys193 the composition is skewed to basic residues. The residue at position 333 (Thr333) is a Phosphothreonine. The interval Ala469–Gln658 is disordered. Residues Gly484 to Lys493 are compositionally biased toward polar residues. Residues Glu509–Gly525 are compositionally biased toward basic and acidic residues. Residues Asp526–Gln540 show a composition bias toward polar residues. 2 stretches are compositionally biased toward acidic residues: residues Ser543–Asp581 and Asp606–Glu627. The span at Asp639–Val650 shows a compositional bias: basic and acidic residues. A phosphoserine mark is found at Ser648, Ser652, and Ser655.

The protein belongs to the nucleosome assembly protein (NAP) family. Interacts with histones. Interacts with CASK. Part of a complex containing CASK, TBR1 and TSPYL2. Phosphorylation at Thr-333 impairs function on cell proliferation. Present at high levels in the pituitary gland and at moderate levels in adrenal gland, brain, testis and ovary. In brain, expressed both in mature neurons and progenitor cells (at protein level).

The protein localises to the nucleus. Its subcellular location is the cytoplasm. Functionally, part of the CASK/TBR1/TSPYL2 transcriptional complex which modulates gene expression in response to neuronal synaptic activity, probably by facilitating nucleosome assembly. May inhibit cell proliferation by inducing p53-dependent CDKN1A expression. The chain is Testis-specific Y-encoded-like protein 2 (Tspyl2) from Mus musculus (Mouse).